We begin with the raw amino-acid sequence, 204 residues long: Thiamine-phosphate synthase (204 aa).

Residues 35–39 and N67 each bind 4-amino-2-methyl-5-(diphosphooxymethyl)pyrimidine; that span reads QVREK. Mg(2+) is bound by residues D68 and D87. S106 contributes to the 4-amino-2-methyl-5-(diphosphooxymethyl)pyrimidine binding site. 132 to 134 is a binding site for 2-[(2R,5Z)-2-carboxy-4-methylthiazol-5(2H)-ylidene]ethyl phosphate; it reads TPT. K135 serves as a coordination point for 4-amino-2-methyl-5-(diphosphooxymethyl)pyrimidine. 2-[(2R,5Z)-2-carboxy-4-methylthiazol-5(2H)-ylidene]ethyl phosphate-binding positions include G163 and 183–184; that span reads VS.

It belongs to the thiamine-phosphate synthase family. It depends on Mg(2+) as a cofactor.

It catalyses the reaction 2-[(2R,5Z)-2-carboxy-4-methylthiazol-5(2H)-ylidene]ethyl phosphate + 4-amino-2-methyl-5-(diphosphooxymethyl)pyrimidine + 2 H(+) = thiamine phosphate + CO2 + diphosphate. The catalysed reaction is 2-(2-carboxy-4-methylthiazol-5-yl)ethyl phosphate + 4-amino-2-methyl-5-(diphosphooxymethyl)pyrimidine + 2 H(+) = thiamine phosphate + CO2 + diphosphate. The enzyme catalyses 4-methyl-5-(2-phosphooxyethyl)-thiazole + 4-amino-2-methyl-5-(diphosphooxymethyl)pyrimidine + H(+) = thiamine phosphate + diphosphate. It participates in cofactor biosynthesis; thiamine diphosphate biosynthesis; thiamine phosphate from 4-amino-2-methyl-5-diphosphomethylpyrimidine and 4-methyl-5-(2-phosphoethyl)-thiazole: step 1/1. Its function is as follows. Condenses 4-methyl-5-(beta-hydroxyethyl)thiazole monophosphate (THZ-P) and 2-methyl-4-amino-5-hydroxymethyl pyrimidine pyrophosphate (HMP-PP) to form thiamine monophosphate (TMP). The chain is Thiamine-phosphate synthase from Vibrio parahaemolyticus serotype O3:K6 (strain RIMD 2210633).